The sequence spans 270 residues: MLVIEGLTCRFGSKAAVDAASFSIDRGSFVGVIGRSGAGKSTLLRMLNRLAEPSEGRILFEGVDVTALQGRELRQWRARSAMIFQQFNLVGRLDVLTNVLMGRLAHVPAWRSLAQVWPEKDRALAMSALDQFDIAPLAAQRADQLSGGQQQRVAIARALVQEPDLILADEPIASLDPRNTKVVMDALLRINKHFGITVLCNLHSLDLARSYCDRLIGMANGRIVFDGAPAELTDSIARELYDLEADDVMGSAPVHAPIGALVPQLGTVAA.

Positions 2 to 245 constitute an ABC transporter domain; the sequence is LVIEGLTCRF…IARELYDLEA (244 aa). 34–41 is a binding site for ATP; it reads GRSGAGKS.

Belongs to the ABC transporter superfamily. Phosphonates importer (TC 3.A.1.9.1) family. As to quaternary structure, the complex is composed of two ATP-binding proteins (PhnC), two transmembrane proteins (PhnE) and a solute-binding protein (PhnD).

The protein resides in the cell inner membrane. The enzyme catalyses phosphonate(out) + ATP + H2O = phosphonate(in) + ADP + phosphate + H(+). Part of the ABC transporter complex PhnCDE involved in phosphonates import. Responsible for energy coupling to the transport system. The sequence is that of Phosphonates import ATP-binding protein PhnC from Rhodopseudomonas palustris (strain BisB5).